The following is a 526-amino-acid chain: Peptide chain release factor 3 (526 aa).

Residues 9 to 277 (NKRRTFAIIS…DFVEYAPGPQ (269 aa)) form the tr-type G domain. GTP-binding positions include 18-25 (SHPDAGKT), 86-90 (DTPGH), and 140-143 (NKLD).

This sequence belongs to the TRAFAC class translation factor GTPase superfamily. Classic translation factor GTPase family. PrfC subfamily.

Its subcellular location is the cytoplasm. Its function is as follows. Increases the formation of ribosomal termination complexes and stimulates activities of RF-1 and RF-2. It binds guanine nucleotides and has strong preference for UGA stop codons. It may interact directly with the ribosome. The stimulation of RF-1 and RF-2 is significantly reduced by GTP and GDP, but not by GMP. This Legionella pneumophila (strain Paris) protein is Peptide chain release factor 3.